We begin with the raw amino-acid sequence, 376 residues long: Copper-containing nitrite reductase (376 aa).

The segment at residues Met1–Gly33 is a signal peptide (tat-type signal). Gln34 carries the pyrrolidone carboxylic acid modification. Plastocyanin-like domains follow at residues Gln34–Ile211 and Tyr212–Thr376. Cu cation contacts are provided by His131, His136, His171, Cys172, His181, Met186, and His342.

This sequence belongs to the multicopper oxidase family. In terms of assembly, homotrimer. Requires Cu(2+) as cofactor. The cofactor is Cu(+). FAD serves as cofactor. Post-translationally, predicted to be exported by the Tat system. The position of the signal peptide cleavage has been experimentally proven.

It localises to the periplasm. The catalysed reaction is nitric oxide + Fe(III)-[cytochrome c] + H2O = Fe(II)-[cytochrome c] + nitrite + 2 H(+). It functions in the pathway nitrogen metabolism; nitrate reduction (denitrification); dinitrogen from nitrate: step 2/4. This Alcaligenes faecalis protein is Copper-containing nitrite reductase (nirK).